Here is a 481-residue protein sequence, read N- to C-terminus: Pentatricopeptide repeat-containing protein At2g48000 (481 aa).

9 PPR repeats span residues 147-181 (TTSV…QDGP), 187-221 (SVST…NILP), 222-256 (DSST…LVKP), 257-287 (TLAT…VKRH), 292-324 (EIKL…LIPK), 328-362 (KPWL…GLQI), 364-398 (TDGI…GWKM), 399-433 (SRSM…KISR), and 434-469 (SKKT…GHDF).

Belongs to the PPR family. P subfamily.

The chain is Pentatricopeptide repeat-containing protein At2g48000 from Arabidopsis thaliana (Mouse-ear cress).